The following is a 490-amino-acid chain: Bifunctional protein HldE (490 aa).

The segment at 1 to 330 (MSRFDTLLQS…RKILPHASLA (330 aa)) is ribokinase. 205–208 (NRKE) provides a ligand contact to ATP. Asp275 is a catalytic residue. Residues 358-490 (FTNGCFDILH…LVEKAREGTT (133 aa)) are cytidylyltransferase.

The protein in the N-terminal section; belongs to the carbohydrate kinase PfkB family. This sequence in the C-terminal section; belongs to the cytidylyltransferase family. Homodimer.

It catalyses the reaction D-glycero-beta-D-manno-heptose 7-phosphate + ATP = D-glycero-beta-D-manno-heptose 1,7-bisphosphate + ADP + H(+). The enzyme catalyses D-glycero-beta-D-manno-heptose 1-phosphate + ATP + H(+) = ADP-D-glycero-beta-D-manno-heptose + diphosphate. Its pathway is nucleotide-sugar biosynthesis; ADP-L-glycero-beta-D-manno-heptose biosynthesis; ADP-L-glycero-beta-D-manno-heptose from D-glycero-beta-D-manno-heptose 7-phosphate: step 1/4. It functions in the pathway nucleotide-sugar biosynthesis; ADP-L-glycero-beta-D-manno-heptose biosynthesis; ADP-L-glycero-beta-D-manno-heptose from D-glycero-beta-D-manno-heptose 7-phosphate: step 3/4. Its function is as follows. Catalyzes the phosphorylation of D-glycero-D-manno-heptose 7-phosphate at the C-1 position to selectively form D-glycero-beta-D-manno-heptose-1,7-bisphosphate. Functionally, catalyzes the ADP transfer from ATP to D-glycero-beta-D-manno-heptose 1-phosphate, yielding ADP-D-glycero-beta-D-manno-heptose. This is Bifunctional protein HldE from Rhodopseudomonas palustris (strain BisB5).